Consider the following 114-residue polypeptide: UPF0342 protein SSP0954 (114 aa).

This sequence belongs to the UPF0342 family.

This is UPF0342 protein SSP0954 from Staphylococcus saprophyticus subsp. saprophyticus (strain ATCC 15305 / DSM 20229 / NCIMB 8711 / NCTC 7292 / S-41).